The following is a 383-amino-acid chain: S-(hydroxymethyl)glutathione dehydrogenase (383 aa).

Cys-51 provides a ligand contact to Zn(2+). His-52 lines the NAD(+) pocket. The Zn(2+) site is built by His-73, Glu-74, Cys-103, Cys-106, Cys-109, Cys-117, and Cys-180. NAD(+) is bound by residues Gly-205–Gly-210, Asp-229, and Ile-298–Val-300.

Belongs to the zinc-containing alcohol dehydrogenase family. Class-III subfamily. Zn(2+) is required as a cofactor.

It catalyses the reaction a primary alcohol + NAD(+) = an aldehyde + NADH + H(+). The enzyme catalyses a secondary alcohol + NAD(+) = a ketone + NADH + H(+). It carries out the reaction S-(hydroxymethyl)glutathione + NADP(+) = S-formylglutathione + NADPH + H(+). The catalysed reaction is S-(hydroxymethyl)glutathione + NAD(+) = S-formylglutathione + NADH + H(+). It catalyses the reaction S-nitrosoglutathione + NADH + H(+) = S-(hydroxysulfenamide)glutathione + NAD(+). Its function is as follows. Oxidizes long-chain alcohols and, in the presence of glutathione, is able to oxidize formaldehyde. Also acts as a S-nitroso-glutathione reductase by catalyzing the NADH-dependent reduction of S-nitrosoglutathione, thereby regulating protein S-nitrosylation. This is S-(hydroxymethyl)glutathione dehydrogenase (FDH1) from Aspergillus oryzae (strain ATCC 42149 / RIB 40) (Yellow koji mold).